The chain runs to 491 residues: 3-octaprenyl-4-hydroxybenzoate carboxy-lyase (491 aa).

Asparagine 172 contacts Mn(2+). Prenylated FMN is bound by residues 175–177 (IYR), 189–191 (RWL), and 194–195 (RG). Glutamate 238 contributes to the Mn(2+) binding site. The active-site Proton donor is the aspartate 287.

The protein belongs to the UbiD family. Homohexamer. The cofactor is prenylated FMN. Requires Mn(2+) as cofactor.

It localises to the cell membrane. The catalysed reaction is a 4-hydroxy-3-(all-trans-polyprenyl)benzoate + H(+) = a 2-(all-trans-polyprenyl)phenol + CO2. The protein operates within cofactor biosynthesis; ubiquinone biosynthesis. Catalyzes the decarboxylation of 3-octaprenyl-4-hydroxy benzoate to 2-octaprenylphenol, an intermediate step in ubiquinone biosynthesis. This Histophilus somni (strain 2336) (Haemophilus somnus) protein is 3-octaprenyl-4-hydroxybenzoate carboxy-lyase.